Consider the following 154-residue polypeptide: UPF0756 membrane protein CKR_1028 (154 aa).

4 consecutive transmembrane segments (helical) span residues 5–25 (IILIIILTASVLGRANSVALA), 48–68 (NGLFLGLVILIASILIPIADG), 82–102 (WLGIFALLVSLFTTYLSGLGM), and 113–133 (IMPALILGAVIAAAFLGGVPV).

This sequence belongs to the UPF0756 family.

It localises to the cell membrane. The polypeptide is UPF0756 membrane protein CKR_1028 (Clostridium kluyveri (strain NBRC 12016)).